Consider the following 255-residue polypeptide: tRNA (guanine-N(1)-)-methyltransferase (255 aa).

S-adenosyl-L-methionine-binding positions include glycine 117 and 137–142 (LGDFVL).

This sequence belongs to the RNA methyltransferase TrmD family. Homodimer.

The protein resides in the cytoplasm. The enzyme catalyses guanosine(37) in tRNA + S-adenosyl-L-methionine = N(1)-methylguanosine(37) in tRNA + S-adenosyl-L-homocysteine + H(+). Functionally, specifically methylates guanosine-37 in various tRNAs. The protein is tRNA (guanine-N(1)-)-methyltransferase of Paracidovorax citrulli (strain AAC00-1) (Acidovorax citrulli).